The sequence spans 263 residues: Type III pantothenate kinase (263 aa).

14-21 (DIGNTSVN) is a binding site for ATP. Residue 115-118 (GADR) coordinates substrate. The active-site Proton acceptor is the Asp-117. A K(+)-binding site is contributed by Asp-137. Thr-140 contributes to the ATP binding site. Thr-192 contacts substrate.

The protein belongs to the type III pantothenate kinase family. In terms of assembly, homodimer. It depends on NH4(+) as a cofactor. K(+) serves as cofactor.

It is found in the cytoplasm. It catalyses the reaction (R)-pantothenate + ATP = (R)-4'-phosphopantothenate + ADP + H(+). Its pathway is cofactor biosynthesis; coenzyme A biosynthesis; CoA from (R)-pantothenate: step 1/5. Functionally, catalyzes the phosphorylation of pantothenate (Pan), the first step in CoA biosynthesis. The sequence is that of Type III pantothenate kinase from Dehalococcoides mccartyi (strain ATCC BAA-2100 / JCM 16839 / KCTC 5957 / BAV1).